Here is a 117-residue protein sequence, read N- to C-terminus: NADH-ubiquinone oxidoreductase chain 3 (117 aa).

3 helical membrane passes run 5 to 25, 57 to 77, and 86 to 106; these read ALSS…AWVL, FFLL…LMPL, and VFTT…GLIH.

This sequence belongs to the complex I subunit 3 family.

Its subcellular location is the mitochondrion membrane. It catalyses the reaction a ubiquinone + NADH + 5 H(+)(in) = a ubiquinol + NAD(+) + 4 H(+)(out). In terms of biological role, core subunit of the mitochondrial membrane respiratory chain NADH dehydrogenase (Complex I) that is believed to belong to the minimal assembly required for catalysis. Complex I functions in the transfer of electrons from NADH to the respiratory chain. The immediate electron acceptor for the enzyme is believed to be ubiquinone. The chain is NADH-ubiquinone oxidoreductase chain 3 (ND3) from Lumbricus terrestris (Common earthworm).